We begin with the raw amino-acid sequence, 183 residues long: Histone deacetylase complex subunit SAP30L (183 aa).

Met-1 is subject to N-acetylmethionine. Acidic residues predominate over residues 1–10 (MNGFSTEEDS). Residues 1–23 (MNGFSTEEDSREGPPAAPAAAAP) are disordered. Intrachain disulfides connect Cys-29–Cys-30 and Cys-38–Cys-74. The Atypical zinc finger occupies 29–77 (CCLIEDGERCVRPAGNASFSKRVQKSISQKKLKLDIDKSVRHLYICDFH). Lys-49 participates in a covalent cross-link: Glycyl lysine isopeptide (Lys-Gly) (interchain with G-Cter in SUMO2). Residues 85–105 (RNKRKRKTSDDGGDSPEHDTD) form a disordered region. A Nuclear localization signal (NLS) motif is present at residues 86-91 (NKRKRK). Residues 88 to 90 (RKR) are important for DNA and phosphoinositide binding. Thr-92 bears the Phosphothreonine mark. A phosphoserine mark is found at Ser-93 and Ser-99. The residue at position 104 (Thr-104) is a Phosphothreonine. Glycyl lysine isopeptide (Lys-Gly) (interchain with G-Cter in SUMO2) cross-links involve residues Lys-155, Lys-166, and Lys-175.

The protein belongs to the SAP30 family. As to quaternary structure, interacts with components of the histone deacetylase complex SIN3A, HDAC1 and HDAC2. Binds histones and nucleosomes. Interacts with FEZ1. As to expression, detected in brain and ovary, and at lower levels in heart, small intestine, lung, kidney, skeletal muscle, stomach and spleen (at protein level). Ubiquitous; expressed in all tissues tested with highest levels in testis.

The protein localises to the nucleus. It is found in the nucleolus. In terms of biological role, functions as a transcription repressor, probably via its interaction with histone deacetylase complexes. Involved in the functional recruitment of the class 1 Sin3-histone deacetylase complex (HDAC) to the nucleolus. Binds DNA, apparently without sequence-specificity, and bends bound double-stranded DNA. Binds phosphoinositol phosphates (phosphoinositol 3-phosphate, phosphoinositol 4-phosphate and phosphoinositol 5-phosphate) via the same basic sequence motif that mediates DNA binding and nuclear import. Its function is as follows. Functions as a transcription repressor; isoform 2 has lower transcription repressor activity than isoform 1 and isoform 3. Functions as a transcription repressor; its activity is marginally lower than that of isoform 1. This chain is Histone deacetylase complex subunit SAP30L (SAP30L), found in Homo sapiens (Human).